The sequence spans 489 residues: Glycogen synthase (489 aa).

ADP-alpha-D-glucose is bound at residue Arg-20.

The protein belongs to the glycosyltransferase 1 family. Bacterial/plant glycogen synthase subfamily.

It catalyses the reaction [(1-&gt;4)-alpha-D-glucosyl](n) + ADP-alpha-D-glucose = [(1-&gt;4)-alpha-D-glucosyl](n+1) + ADP + H(+). Its pathway is glycan biosynthesis; glycogen biosynthesis. Synthesizes alpha-1,4-glucan chains using ADP-glucose. The sequence is that of Glycogen synthase from Chlorobium luteolum (strain DSM 273 / BCRC 81028 / 2530) (Pelodictyon luteolum).